Here is a 370-residue protein sequence, read N- to C-terminus: Sensor protein GtcS (370 aa).

2 helical membrane passes run I2 to L22 and A40 to Y60. The HAMP domain maps to K66–A118. In terms of domain architecture, Histidine kinase spans D133–L355.

The protein resides in the cell membrane. It catalyses the reaction ATP + protein L-histidine = ADP + protein N-phospho-L-histidine.. Its function is as follows. Member of the two-component regulatory system GtcS/GtcR which may act in the control of the transcription of the grs operon which encodes the multienzymes involved in the biosynthesis of the peptide antibiotic gramicidin S. Probably activates GtcR by phosphorylation. The sequence is that of Sensor protein GtcS (gtcS) from Aneurinibacillus migulanus (Bacillus migulanus).